The primary structure comprises 501 residues: E3 ubiquitin-protein ligase TRIM35 (501 aa).

An N-acetylmethionine modification is found at Met-1. Ser-8 carries the phosphoserine modification. An RING-type zinc finger spans residues 21–61 (CAVCYDPFRDAVTLRCGHNFCRRCVSGCWEVQTTPSCPVCK). The B box-type zinc-finger motif lies at 96–137 (RSPRPCRAHRAPLTLFCVEDKELLCCACQADARHQEHRVQPI). Residues Cys-101, His-104, Cys-123, and His-129 each coordinate Zn(2+). Residues 209-252 (MKEESRKKHLLAEEKMKQLAEQTEALAREIERLQMEMKEDDMTF) are a coiled coil. In terms of domain architecture, B30.2/SPRY spans 284–495 (LESLQYRVWK…LRICHLRVSI (212 aa)).

In terms of assembly, interacts with PKM isoform M2, but not isoform M1; this interaction may compete with that between PKM and FGFR1, and hence reduces FGFR1-dependent tyrosine phosphorylation of PKM. Interacts with IRF7; this interaction promotes IRF7 proteasomal degradation. Interacts with TRAF3; this interaction promotes TRAF3 activation.

It is found in the cytoplasm. It localises to the nucleus. The catalysed reaction is S-ubiquitinyl-[E2 ubiquitin-conjugating enzyme]-L-cysteine + [acceptor protein]-L-lysine = [E2 ubiquitin-conjugating enzyme]-L-cysteine + N(6)-ubiquitinyl-[acceptor protein]-L-lysine.. The protein operates within protein modification; protein ubiquitination. E3 ubiquitin-protein ligase that participates in multiple biological processes including cell death, glucose metabolism, and in particular, the innate immune response. Mediates 'Lys-63'-linked polyubiquitination of TRAF3 thereby promoting type I interferon production via RIG-I signaling pathway. Can also catalyze 'Lys-48'-linked polyubiquitination and proteasomal degradation of viral proteins such as influenza virus PB2. Acts as a negative feedback regulator of TLR7- and TLR9-triggered signaling. Mechanistically, promotes the 'Lys-48'-linked ubiquitination of IRF7 and induces its degradation via a proteasome-dependent pathway. Reduces FGFR1-dependent tyrosine phosphorylation of PKM, inhibiting PKM-dependent lactate production, glucose metabolism, and cell growth. This is E3 ubiquitin-protein ligase TRIM35 (Trim35) from Rattus norvegicus (Rat).